The primary structure comprises 175 residues: Large ribosomal subunit protein uL6 (175 aa).

The protein belongs to the universal ribosomal protein uL6 family. In terms of assembly, part of the 50S ribosomal subunit.

Functionally, this protein binds to the 23S rRNA, and is important in its secondary structure. It is located near the subunit interface in the base of the L7/L12 stalk, and near the tRNA binding site of the peptidyltransferase center. In Xanthomonas campestris pv. campestris (strain 8004), this protein is Large ribosomal subunit protein uL6.